Here is an 81-residue protein sequence, read N- to C-terminus: Protein Vpu (81 aa).

Over methionine 1 to leucine 7 the chain is Extracellular. A helical membrane pass occupies residues alanine 8–isoleucine 28. The Cytoplasmic segment spans residues glutamate 29–leucine 81. 2 positions are modified to phosphoserine; by host CK2: serine 53 and serine 57.

It belongs to the HIV-1 VPU protein family. As to quaternary structure, homopentamer. Interacts with host CD4 and BRTC; these interactions induce proteasomal degradation of CD4. Interacts with host BST2; this interaction leads to the degradation of host BST2. Interacts with host FBXW11. Interacts with host AP1M1; this interaction plays a role in the mistrafficking and subsequent degradation of host BST2. Interacts with host RANBP2; this interaction allows Vpu to down-regulate host BLM sumoylation. In terms of processing, phosphorylated by host CK2. This phosphorylation is necessary for interaction with human BTRC and degradation of CD4.

The protein localises to the host membrane. With respect to regulation, ion channel activity is inhibited by hexamethylene amiloride in vitro. Functionally, enhances virion budding by targeting host CD4 and Tetherin/BST2 to proteasome degradation. Degradation of CD4 prevents any unwanted premature interactions between viral Env and its host receptor CD4 in the endoplasmic reticulum. Degradation of antiretroviral protein Tetherin/BST2 is important for virion budding, as BST2 tethers new viral particles to the host cell membrane. Mechanistically, Vpu bridges either CD4 or BST2 to BTRC, a substrate recognition subunit of the Skp1/Cullin/F-box protein E3 ubiquitin ligase, induces their ubiquitination and subsequent proteasomal degradation. The alteration of the E3 ligase specificity by Vpu seems to promote the degradation of host IKBKB, leading to NF-kappa-B down-regulation and subsequent apoptosis. Acts as a viroporin that forms an oligomeric ion channel in membranes. Modulates the host DNA repair mechanisms to promote degradation of nuclear viral cDNA in cells that are already productively infected in order to suppress immune sensing and proviral hyper-integration (superinfection). Manipulates PML-NBs and modulates SUMOylation of host BLM protein thereby enhancing its DNA-end processing activity toward viral unintegrated linear DNA. Also inhibits RAD52-mediated homologous repair of viral cDNA, preventing the generation of dead-end circular forms of single copies of the long terminal repeat and permitting sustained nucleolytic attack. The protein is Protein Vpu of Homo sapiens (Human).